Reading from the N-terminus, the 142-residue chain is Nucleoside diphosphate kinase (142 aa).

Lysine 11, phenylalanine 59, arginine 87, threonine 93, arginine 104, and asparagine 114 together coordinate ATP. The Pros-phosphohistidine intermediate role is filled by histidine 117.

The protein belongs to the NDK family. In terms of assembly, homotetramer. Mg(2+) is required as a cofactor.

Its subcellular location is the cytoplasm. The enzyme catalyses a 2'-deoxyribonucleoside 5'-diphosphate + ATP = a 2'-deoxyribonucleoside 5'-triphosphate + ADP. It catalyses the reaction a ribonucleoside 5'-diphosphate + ATP = a ribonucleoside 5'-triphosphate + ADP. Major role in the synthesis of nucleoside triphosphates other than ATP. The ATP gamma phosphate is transferred to the NDP beta phosphate via a ping-pong mechanism, using a phosphorylated active-site intermediate. The protein is Nucleoside diphosphate kinase of Marinobacter nauticus (strain ATCC 700491 / DSM 11845 / VT8) (Marinobacter aquaeolei).